The chain runs to 326 residues: Peroxidase 1 (326 aa).

The N-terminal stretch at 1-22 (MASSRVILALLLAAAAVMASSA) is a signal peptide. Residue Gln23 is modified to Pyrrolidone carboxylic acid. 4 cysteine pairs are disulfide-bonded: Cys33–Cys112, Cys66–Cys71, Cys118–Cys322, and Cys196–Cys231. Catalysis depends on His64, which acts as the Proton acceptor. 5 residues coordinate Ca(2+): Asp65, Val68, Gly70, Asp72, and Ser74. N-linked (GlcNAc...) asparagine glycosylation is found at Asn82 and Asn153. Residue Pro159 participates in substrate binding. Residue Asn164 is glycosylated (N-linked (GlcNAc...) asparagine). Heme b is bound at residue His189. Thr190 serves as a coordination point for Ca(2+). N-linked (GlcNAc...) asparagine glycans are attached at residues Asn205 and Asn237. Residues Asp244, Ser247, and Asp252 each coordinate Ca(2+).

Belongs to the peroxidase family. Classical plant (class III) peroxidase subfamily. The cofactor is Ca(2+). It depends on heme b as a cofactor.

The protein resides in the secreted. It catalyses the reaction 2 a phenolic donor + H2O2 = 2 a phenolic radical donor + 2 H2O. In terms of biological role, removal of H(2)O(2), oxidation of toxic reductants, biosynthesis and degradation of lignin, suberization, auxin catabolism, response to environmental stresses such as wounding, pathogen attack and oxidative stress. These functions might be dependent on each isozyme/isoform in each plant tissue. This is Peroxidase 1 (PRX74) from Oryza sativa subsp. japonica (Rice).